A 299-amino-acid polypeptide reads, in one-letter code: Ribonuclease H2 subunit A (299 aa).

Met1 carries the N-acetylmethionine modification. The region spanning 28–251 (PCVLGVDEAG…AQSILESEAE (224 aa)) is the RNase H type-2 domain. The a divalent metal cation site is built by Asp34, Glu35, and Asp142. Residues Thr205 and Thr217 each carry the phosphothreonine modification. Positions 250–272 (AEDVKWEDSETGDPKGPGKIKSY) are disordered. Ser258 carries the phosphoserine modification.

Belongs to the RNase HII family. Eukaryotic subfamily. As to quaternary structure, the RNase H2 complex is a heterotrimer composed of the catalytic subunit RNASEH2A and the non-catalytic subunits RNASEH2B and RNASEH2C. It depends on Mn(2+) as a cofactor. The cofactor is Mg(2+).

Its subcellular location is the nucleus. It catalyses the reaction Endonucleolytic cleavage to 5'-phosphomonoester.. In terms of biological role, catalytic subunit of RNase HII, an endonuclease that specifically degrades the RNA of RNA:DNA hybrids. Participates in DNA replication, possibly by mediating the removal of lagging-strand Okazaki fragment RNA primers during DNA replication. Mediates the excision of single ribonucleotides from DNA:RNA duplexes. The protein is Ribonuclease H2 subunit A (RNASEH2A) of Bos taurus (Bovine).